The chain runs to 1137 residues: Bone sialoprotein-binding protein (1137 aa).

An N-terminal signal peptide occupies residues 1–52 (MINRDNKKAITKKGMISNRLNKFSIRKYTVGTASILVGTTLIFGLGNQEAKA). Residues 53–601 (AENTSTENAK…GDGTVKPEEK (549 aa)) are ligand binding A region. Disordered stretches follow at residues 54–249 (ENTS…TAPT) and 675–697 (LPTK…VTVK). The span at 61 to 75 (AKQDEASASDNKEVV) shows a compositional bias: basic and acidic residues. Over residues 77 to 89 (ETENNSTQKNDLT) the composition is skewed to polar residues. Residues 92–106 (IKKETNTDSHQEAKE) show a composition bias toward basic and acidic residues. Over residues 109–126 (TTSSTQQQQNNATTSTET) the composition is skewed to low complexity. Basic and acidic residues predominate over residues 130-145 (NIEKENVKPSTDKTAT). Positions 158 to 207 (PNNTNNDVTTKPSTSEIQTTPTTPQESTNIENSQPQPTPSKVDNQVTDAT) are enriched in polar residues. Positions 216 to 241 (SKEELKNNPEKLKELVRNDSNTDRST) are enriched in basic and acidic residues. CNA-B domains lie at 602 to 714 (LYKI…YKEP), 715 to 824 (KYNL…YKTP), and 825 to 935 (KYSL…EEDT). A disordered region spans residues 896-1112 (TQTGTNTTED…TGSENNGSNN (217 aa)). 2 stretches are compositionally biased toward acidic residues: residues 903–913 (TEDDKDADGGE) and 930–1076 (YFEE…DSDS). An LPXTG sorting signal motif is present at residues 1100–1104 (LPETG). At threonine 1103 the chain carries Pentaglycyl murein peptidoglycan amidated threonine. A propeptide spans 1104–1137 (GSENNGSNNATLFGGLFAALGSLLLFGRRKKQNK) (removed by sortase).

The protein belongs to the serine-aspartate repeat-containing protein (SDr) family.

Its subcellular location is the secreted. It is found in the cell wall. Functionally, specifically interacts with bone sialoprotein (BSP), a glycoprotein of bone and dentin extracellular matrix. Could contribute to staphylococcal osteomyelitis and arthritis. This chain is Bone sialoprotein-binding protein (bbp), found in Staphylococcus aureus (strain MRSA252).